A 257-amino-acid polypeptide reads, in one-letter code: MQELIRVVILAIVQGIAEFLPISSSGHLVILGSMLGELGESVTLEIILHAGTLGSILVVFWQRIWALLLKDRRVIGLLVIGTLPAVVIGLTIKTQFPEILRSPLLAGAMLIVTGVMLIVLGRLTPKSGTYDRLGLGAAFLVGCFQAFAILPGISRSGSTILGGRLMGLDRDDSVTFSFLLAIPAILGATVLAIKDLLEDGSSGETSIEVLSIGAAVAFAVGIVALKWLIRWSREDRLHWFAYWCIPAGLLVVLLNLR.

The next 8 helical transmembrane spans lie at 4–24 (LIRV…PISS), 41–61 (SVTL…VVFW), 74–94 (VIGL…TIKT), 103–123 (PLLA…LGRL), 133–153 (LGLG…LPGI), 173–193 (SVTF…VLAI), 209–229 (VLSI…KWLI), and 236–256 (RLHW…LLNL).

It belongs to the UppP family.

It is found in the cell inner membrane. It catalyses the reaction di-trans,octa-cis-undecaprenyl diphosphate + H2O = di-trans,octa-cis-undecaprenyl phosphate + phosphate + H(+). In terms of biological role, catalyzes the dephosphorylation of undecaprenyl diphosphate (UPP). Confers resistance to bacitracin. In Rhodopirellula baltica (strain DSM 10527 / NCIMB 13988 / SH1), this protein is Undecaprenyl-diphosphatase.